We begin with the raw amino-acid sequence, 174 residues long: Large ribosomal subunit protein uL15 (174 aa).

Disordered stretches follow at residues 1–56 (MKLH…GQMR) and 150–174 (VERR…TPGA). A compositionally biased stretch (gly residues) spans 21-35 (RGIGSGKGKTGGKGM).

It belongs to the universal ribosomal protein uL15 family. Part of the 50S ribosomal subunit.

Functionally, binds to the 23S rRNA. The sequence is that of Large ribosomal subunit protein uL15 from Roseiflexus castenholzii (strain DSM 13941 / HLO8).